The sequence spans 206 residues: Homoserine/homoserine lactone efflux protein (206 aa).

The next 6 helical transmembrane spans lie at 5–25, 45–65, 68–88, 117–137, 148–168, and 182–202; these read WWFA…SGAI, GLQT…GTLF, SLIA…WLGI, FVNL…PQFI, LILG…YATL, and MKAL…LLAS.

Belongs to the Rht family.

It localises to the cell membrane. Conducts the efflux of homoserine and homoserine lactone. The polypeptide is Homoserine/homoserine lactone efflux protein (rhtB) (Salmonella typhi).